The primary structure comprises 728 residues: Rho-related BTB domain-containing protein 2 (728 aa).

Residues 1–210 form a rho-like region; it reads MDSDMDYERP…DNAIRAALIS (210 aa). Residues 21–28, 84–88, and 140–143 contribute to the GTP site; these read GDNAVGKT, DTFGD, and CQLD. 2 consecutive BTB domains span residues 266-333 and 500-567; these read ADVI…HHHH and SDVT…TSSP. Residues 304–313 are compositionally biased toward gly residues; that stretch reads ELGGPSGSGG. A disordered region spans residues 304–333; it reads ELGGPSGSGGPRPEDHRSHPEQHHHHHHHH. Residues 315 to 324 show a composition bias toward basic and acidic residues; it reads RPEDHRSHPE. Positions 703-728 are disordered; sequence FWNSPSSPSSSAAGSASPSSSSSAVV. Positions 706 to 728 are enriched in low complexity; sequence SPSSPSSSAAGSASPSSSSSAVV.

Belongs to the small GTPase superfamily. Rho family. As to quaternary structure, interacts with HSP90AA1 and HSP90AB1. Forms a complex with CUL3 and RBX1. Interacts (via BTB 1 domain) with CUL3. Interacts with MSI2. Post-translationally, autoubiquitinated by RHOBTB2-CUL3-RBX1 ubiquitin ligase complex. In terms of tissue distribution, expressed in most tissues, with highest expression in brain.

Functionally, regulator of cell proliferation and apoptosis. It likely functions as a substrate-adapter that recruits key substrates, e.g. MSI2, to CUL3-based ubiquitin ligase complexes for degradation. Required for MSI2 ubiquitination and degradation. This is Rho-related BTB domain-containing protein 2 (Rhobtb2) from Mus musculus (Mouse).